The following is a 501-amino-acid chain: MMDPAAGSGPDGAAVMPPELPALPVAAEDPMALYRQVLRDFKELFFCLEPMEITRYVHRNEGRCLSLGPPKGWHVMLRTEDGIITAAKQAASKLICCREPLTPLGYAVILLPEPRRDHHDGMVATPYVVFMGRFSRVYAYDTREKYMVLVSHNLDELARYGVSRSEIAYRDVIHTTLRRMTVPVPRRYPKGARTMHVLFLNDTTPEGSYATAERILGCDVKLHTPGYGTVIMRLMKTVQQLHRIWPFCALTEVESRRWWWAVRANLATPWYVLGVTGRPRPGRSFVAEVLVLLDWFGAVYAIQMDDPNHYVRRVANTITEFFRMGLLKMVFRHRRFERERQRQTRMEHRHLCPHHHERAVDHKRDILFNEDAALPDERRERERRILQQQYDWLCLTERFDPHEGAWERLDPNTLVLHRYDTNSQSYVLDPDIVGVEAAEREAAGHQDDTGPRLHCLVTTRSSTREGAERVITALVHQSRLVTYSDPFPLKSLTGVREYIQI.

Belongs to the herpesviridae US22 family.

It localises to the virion tegument. This chain is Tegument protein US24 (US24), found in Human cytomegalovirus (strain AD169) (HHV-5).